The following is a 331-amino-acid chain: Biotin synthase (331 aa).

Positions 39 to 264 (SELQTCYLVS…VFPQSMVRLA (226 aa)) constitute a Radical SAM core domain. Residues C54, C58, and C61 each contribute to the [4Fe-4S] cluster site. Residues C98, C130, C190, and R262 each coordinate [2Fe-2S] cluster.

It belongs to the radical SAM superfamily. Biotin synthase family. Homodimer. It depends on [4Fe-4S] cluster as a cofactor. The cofactor is [2Fe-2S] cluster.

It carries out the reaction (4R,5S)-dethiobiotin + (sulfur carrier)-SH + 2 reduced [2Fe-2S]-[ferredoxin] + 2 S-adenosyl-L-methionine = (sulfur carrier)-H + biotin + 2 5'-deoxyadenosine + 2 L-methionine + 2 oxidized [2Fe-2S]-[ferredoxin]. Its pathway is cofactor biosynthesis; biotin biosynthesis; biotin from 7,8-diaminononanoate: step 2/2. Its function is as follows. Catalyzes the conversion of dethiobiotin (DTB) to biotin by the insertion of a sulfur atom into dethiobiotin via a radical-based mechanism. This chain is Biotin synthase, found in Chlamydia abortus (strain DSM 27085 / S26/3) (Chlamydophila abortus).